The following is a 390-amino-acid chain: L-seryl-tRNA(Sec) selenium transferase (390 aa).

Position 225 is an N6-(pyridoxal phosphate)lysine (K225).

This sequence belongs to the SelA family. Pyridoxal 5'-phosphate serves as cofactor.

The protein localises to the cytoplasm. The enzyme catalyses L-seryl-tRNA(Sec) + selenophosphate + H(+) = L-selenocysteinyl-tRNA(Sec) + phosphate. It functions in the pathway aminoacyl-tRNA biosynthesis; selenocysteinyl-tRNA(Sec) biosynthesis; selenocysteinyl-tRNA(Sec) from L-seryl-tRNA(Sec) (bacterial route): step 1/1. Converts seryl-tRNA(Sec) to selenocysteinyl-tRNA(Sec) required for selenoprotein biosynthesis. This is L-seryl-tRNA(Sec) selenium transferase from Helicobacter pylori (strain J99 / ATCC 700824) (Campylobacter pylori J99).